Here is a 127-residue protein sequence, read N- to C-terminus: Small ribosomal subunit protein eS6 (127 aa).

Belongs to the eukaryotic ribosomal protein eS6 family.

In Picrophilus torridus (strain ATCC 700027 / DSM 9790 / JCM 10055 / NBRC 100828 / KAW 2/3), this protein is Small ribosomal subunit protein eS6.